The chain runs to 799 residues: Cadherin-8 (799 aa).

A signal peptide spans 1–29 (MPERLAEMLLDLWTPLIILWITLPPCIYM). The propeptide occupies 30–61 (APMNQSQVLMSGSPLELNSLGEEQRILNRSKR). 2 N-linked (GlcNAc...) asparagine glycosylation sites follow: N33 and N57. 5 consecutive Cadherin domains span residues 62–167 (GWVW…APEF), 168–276 (LNGP…PPKF), 277–391 (AQSL…PPVF), 392–494 (SSPT…DNAP), and 495–616 (EFAS…YVLP). Topologically, residues 62–621 (GWVWNQMFVL…AYVLPIGLSM (560 aa)) are extracellular. N188 carries N-linked (GlcNAc...) asparagine glycosylation. N-linked (GlcNAc...) asparagine glycosylation is found at N463, N473, and N544. The helical transmembrane segment at 622–642 (GALIAILACIILLLVIVVLFV) threads the bilayer. Topologically, residues 643–799 (TLRRHKNEPL…YSVGESDKET (157 aa)) are cytoplasmic. At S795 the chain carries Phosphoserine.

As to expression, mainly expressed in brain. Found in certain nerve cell lines, such as retinoblasts, glioma cells and neuroblasts.

Its subcellular location is the cell membrane. Functionally, cadherins are calcium-dependent cell adhesion proteins. They preferentially interact with themselves in a homophilic manner in connecting cells; cadherins may thus contribute to the sorting of heterogeneous cell types. The polypeptide is Cadherin-8 (CDH8) (Homo sapiens (Human)).